The sequence spans 250 residues: PF03932 family protein CutC (250 aa).

This sequence belongs to the CutC family.

Its subcellular location is the cytoplasm. The polypeptide is PF03932 family protein CutC (Vibrio vulnificus (strain YJ016)).